The primary structure comprises 410 residues: Peptidase T (410 aa).

Position 79 (histidine 79) interacts with Zn(2+). Aspartate 81 is an active-site residue. Aspartate 142 contributes to the Zn(2+) binding site. Glutamate 176 serves as the catalytic Proton acceptor. Zn(2+) is bound by residues glutamate 177, aspartate 199, and histidine 381.

Belongs to the peptidase M20B family. Zn(2+) serves as cofactor.

The protein resides in the cytoplasm. It catalyses the reaction Release of the N-terminal residue from a tripeptide.. Cleaves the N-terminal amino acid of tripeptides. The chain is Peptidase T from Bacillus velezensis (strain DSM 23117 / BGSC 10A6 / LMG 26770 / FZB42) (Bacillus amyloliquefaciens subsp. plantarum).